Here is a 124-residue protein sequence, read N- to C-terminus: Small ribosomal subunit protein uS12 (124 aa).

Residue Asp-89 is modified to 3-methylthioaspartic acid. A disordered region spans residues 102-124 (LDTSGVNNRKHGRSKYGTKRPKS). A compositionally biased stretch (basic residues) spans 109–124 (NRKHGRSKYGTKRPKS).

It belongs to the universal ribosomal protein uS12 family. Part of the 30S ribosomal subunit. Contacts proteins S8 and S17. May interact with IF1 in the 30S initiation complex.

In terms of biological role, with S4 and S5 plays an important role in translational accuracy. Interacts with and stabilizes bases of the 16S rRNA that are involved in tRNA selection in the A site and with the mRNA backbone. Located at the interface of the 30S and 50S subunits, it traverses the body of the 30S subunit contacting proteins on the other side and probably holding the rRNA structure together. The combined cluster of proteins S8, S12 and S17 appears to hold together the shoulder and platform of the 30S subunit. The polypeptide is Small ribosomal subunit protein uS12 (Francisella tularensis subsp. tularensis (strain FSC 198)).